A 1021-amino-acid chain; its full sequence is Probable LRR receptor-like serine/threonine-protein kinase RFK1 (1021 aa).

An N-terminal signal peptide occupies residues 1 to 39 (MISLYQILAEKKKKKKNDLNIFAFSVFAIICFKFYSVNA). Residues 41–625 (KLPQQEVDAL…PKTGMSPGAY (585 aa)) lie on the Extracellular side of the membrane. N-linked (GlcNAc...) asparagine glycosylation occurs at Asn-96. LRR repeat units lie at residues 99 to 122 (DCHVVKFAFKDHNLPGTLPQIVKL) and 123 to 146 (PYLREIDLAYNYINGTLPREWASS). Residues Asn-136, Asn-147, and Asn-168 are each glycosylated (N-linked (GlcNAc...) asparagine). LRR repeat units follow at residues 148–168 (LTFISLLVNRLSGEIPKEFGN), 169–192 (SSLTYLDLESNAFSGTIPQELGNL), 193–216 (VHLKKLLLSSNKLTGTLPASLARL), 218–240 (NMTDFRINDLQLSGTIPSYIQNW), and 241–266 (KQLERLEMIASGLTGPIPSVISVLSN). A glycan (N-linked (GlcNAc...) asparagine) is linked at Asn-218. N-linked (GlcNAc...) asparagine glycosylation is found at Asn-287 and Asn-300. 4 LRR repeats span residues 288–312 (VTGLTKIILKNCNISGQIPTYLSHL), 313–336 (KELETLDLSFNKLVGGIPSFAQAE), 338–359 (LRFIILAGNMLEGDAPDELLRD), and 361–381 (ITVDLSYNNLKWQSPESRACR). Asn-486 and Asn-512 each carry an N-linked (GlcNAc...) asparagine glycan. The chain crosses the membrane as a helical span at residues 626 to 646 (IAIGIGAPCLIIFILGFLWIC). The Cytoplasmic segment spans residues 647–1021 (GCLPRCGRQR…QERKKEESRP (375 aa)). Position 670 is a phosphothreonine (Thr-670). Positions 681 to 956 (FNPTNKIGEG…EVVAMLEGLY (276 aa)) constitute a Protein kinase domain. Residues 687–695 (IGEGGFGAV) and Lys-709 contribute to the ATP site. Tyr-754 is modified (phosphotyrosine). Asp-807 (proton acceptor) is an active-site residue. A Phosphoserine modification is found at Ser-840. Thr-841 and Thr-846 each carry phosphothreonine. Position 854 is a phosphotyrosine (Tyr-854). The tract at residues 985–1021 (ENNSKTQCSVKSYPSSSSTSSGAGQAVQERKKEESRP) is disordered. The span at 993 to 1005 (SVKSYPSSSSTSS) shows a compositional bias: low complexity. A compositionally biased stretch (basic and acidic residues) spans 1012–1021 (QERKKEESRP).

The protein belongs to the protein kinase superfamily. Ser/Thr protein kinase family. In terms of tissue distribution, mostly expressed in flower buds, especially in stamens.

The protein localises to the membrane. The catalysed reaction is L-seryl-[protein] + ATP = O-phospho-L-seryl-[protein] + ADP + H(+). It carries out the reaction L-threonyl-[protein] + ATP = O-phospho-L-threonyl-[protein] + ADP + H(+). The chain is Probable LRR receptor-like serine/threonine-protein kinase RFK1 (RKF1) from Arabidopsis thaliana (Mouse-ear cress).